The following is a 441-amino-acid chain: Damage-control phosphatase ARMT1 (441 aa).

At alanine 2 the chain carries N-acetylalanine. N6-acetyllysine is present on lysine 40. Serine 102 is subject to Phosphoserine. Positions 253 and 254 each coordinate Mn(2+). 253-254 (DN) provides a ligand contact to substrate. The S-adenosyl-L-methionine site is built by glutamate 258 and aspartate 291. Aspartate 291 is a Mn(2+) binding site. Residues 367-371 (DLNYR) and lysine 404 contribute to the substrate site. Residues 401-404 (RTLK) carry the Subfamily III RTxK motif motif.

This sequence belongs to the damage-control phosphatase family. Sugar phosphate phosphatase III subfamily. Requires Mn(2+) as cofactor. It depends on Ni(2+) as a cofactor. In terms of processing, automethylated.

The enzyme catalyses beta-D-fructose 1-phosphate + H2O = D-fructose + phosphate. It carries out the reaction beta-D-fructose 6-phosphate = dihydroxyacetone + D-glyceraldehyde 3-phosphate. The catalysed reaction is L-glutamyl-[protein] + S-adenosyl-L-methionine = [protein]-L-glutamate 5-O-methyl ester + S-adenosyl-L-homocysteine. Its function is as follows. Metal-dependent phosphatase that shows phosphatase activity against several substrates, including fructose-1-phosphate and fructose-6-phosphate. Its preference for fructose-1-phosphate, a strong glycating agent that causes DNA damage rather than a canonical yeast metabolite, suggests a damage-control function in hexose phosphate metabolism. Has also been shown to have O-methyltransferase activity that methylates glutamate residues of target proteins to form gamma-glutamyl methyl ester residues. Possibly methylates PCNA, suggesting it is involved in the DNA damage response. The sequence is that of Damage-control phosphatase ARMT1 from Bos taurus (Bovine).